Consider the following 371-residue polypeptide: Deoxyhypusine synthase (371 aa).

NAD(+) contacts are provided by residues 112 to 116 (SNLVT), 138 to 140 (SAG), Glu-144, and Asp-245. Residue 143 to 144 (EE) coordinates spermidine. Asp-250 contributes to the spermidine binding site. Gly-291 provides a ligand contact to NAD(+). His-296 is a binding site for spermidine. 316–317 (TG) provides a ligand contact to NAD(+). Residues 322–324 (GSD) and 331–337 (EAVSWGK) each bind spermidine. Lys-337 serves as the catalytic Nucleophile. Residue 350–351 (EA) coordinates NAD(+).

It belongs to the deoxyhypusine synthase family. NAD(+) serves as cofactor.

It catalyses the reaction [eIF5A protein]-L-lysine + spermidine = [eIF5A protein]-deoxyhypusine + propane-1,3-diamine. It functions in the pathway protein modification; eIF5A hypusination. In terms of biological role, catalyzes the NAD-dependent oxidative cleavage of spermidine and the subsequent transfer of the butylamine moiety of spermidine to the epsilon-amino group of a critical lysine residue of the eIF-5A precursor protein to form the intermediate deoxyhypusine residue. This is the first step of the post-translational modification of that lysine into an unusual amino acid residue named hypusine. Hypusination is unique to mature eIF-5A factor and is essential for its function. This Caenorhabditis elegans protein is Deoxyhypusine synthase.